The sequence spans 371 residues: DnaJ homolog subfamily B member 14 (371 aa).

Over 1–238 the chain is Cytoplasmic; sequence MESNRDEAER…GHDREEERAD (238 aa). A TPR repeat occupies 8 to 41; sequence AERCVRIGKAAIEAGDKEKARRFFSKAERLYPSS. Residues 48–92 form a disordered region; the sequence is DALEKNDTAGNGPQSEKMSKSTEQPKAEKDSSGDTGKGHTQDQVD. The span at 64–89 shows a compositional bias: basic and acidic residues; it reads KMSKSTEQPKAEKDSSGDTGKGHTQD. The J domain maps to 102–166; it reads TYYEVLGVSP…EKRKQYDLTG (65 aa). Positions 215–235 are disordered; that stretch reads GRTRYSHHQHHHHSGHDREEE. A compositionally biased stretch (basic residues) spans 218–229; sequence RYSHHQHHHHSG. A helical membrane pass occupies residues 239-259; that stretch reads GGFSMFIQLMPIIVLILVSLL. The Lumenal portion of the chain corresponds to 260 to 371; the sequence is SQLMVSNPPY…NRLTSLFRGG (112 aa).

The protein belongs to the DnaJ family. DNAJB12/DNAJB14 subfamily.

It is found in the endoplasmic reticulum membrane. Acts as a co-chaperone with HSPA8/Hsc70; required to promote protein folding and trafficking, prevent aggregation of client proteins, and promote unfolded proteins to endoplasmic reticulum-associated degradation (ERAD) pathway. Acts by determining hspa8/Hsc70's ATPase and polypeptide-binding activities. Can also act independently of hspa8/Hsc70: together with dnajb12, acts as a chaperone that promotes maturation of potassium channels by stabilizing nascent channel subunits and assembling them into tetramers. While stabilization of nascent channel proteins is dependent on hspa8/Hsc70, the process of oligomerization of channel subunits is independent of hspa8/Hsc70. The polypeptide is DnaJ homolog subfamily B member 14 (dnajb14) (Xenopus laevis (African clawed frog)).